Here is a 157-residue protein sequence, read N- to C-terminus: Ribosomal RNA large subunit methyltransferase H (157 aa).

S-adenosyl-L-methionine contacts are provided by residues Gly-104 and 123–128; that span reads LSSLTL.

This sequence belongs to the RNA methyltransferase RlmH family. As to quaternary structure, homodimer.

The protein localises to the cytoplasm. It carries out the reaction pseudouridine(1915) in 23S rRNA + S-adenosyl-L-methionine = N(3)-methylpseudouridine(1915) in 23S rRNA + S-adenosyl-L-homocysteine + H(+). Its function is as follows. Specifically methylates the pseudouridine at position 1915 (m3Psi1915) in 23S rRNA. This Nitrosococcus oceani (strain ATCC 19707 / BCRC 17464 / JCM 30415 / NCIMB 11848 / C-107) protein is Ribosomal RNA large subunit methyltransferase H.